Consider the following 830-residue polypeptide: MSKMRVLFLAVFLMNSVLMIYCDSDDYIRAGYNHKYPFRICSIAKGTDLMRFDRDISCSPYKSNAKMSEGFFIIYKTNIETYTFPVRTYKNELTFPTSYRDVGVVYFLDRTVMGLAMPVYEANLVNSRAQCYSAVAIKRPDGTVFSAYHEDNNKNETLELFPLNFKSVTNKRFITTKEPYFARGPLWLYSTSTSLNCIVTEATAKAKYPFSYFALTTGEIVEGSPFFDGSNGKHFAEPLEKLTILENYTMIEDLMNGMNGATTLVRKIAFLEKGDTLFSWEIKEENESVCMLKHWTTVTHGLRAETDETYHFISKELTAAFVASKESLNLTDPKQTCIKNEFEKIITDVYMSDYNDAYSMNGSYQIFKTTGDLILIWQPLVQKSLMVLEQGSVNLRRRRDLVDVKSRHDILYVQLQYLYDTLKDYINDALGNLAESWCLDQKRTITMLHELSKISPSSIVSEVYGRPISAQLHGDVLAISKCIEVNQSSVQLYKSMRVVDAKGVRSETMCYNRPLVTFSFVNSTPEVVLGQLGLDNEILLGDHRTEECEIPSTKIFLSGNHAHVYTDYTHTNSTPIEDIEVLDAFIRLKIDPLENADFKLLDLYSPDELSRANVFDLENILREYNSYKSALYTIEAKIATNTPSYVNGINSFLQGLGAIGTGLGSVISVTAGALGDIVGGVVSFLKNPFGGGLMLILAIVVVVIIIVVFVRQKHVLSKPIDMMFPYATNPVTTVSSVTGTTVVKTPSVKDADGGTSVAVSEKEEGMADVSGQISGDEYSQEDALKMLKAIKSLDESYRRKPSSSESHASKPSLIDRIRYRGYKSVNVEEA.

The N-terminal stretch at 1–19 is a signal peptide; that stretch reads MSKMRVLFLAVFLMNSVLM. Topologically, residues 20–688 are virion surface; it reads IYCDSDDYIR…GGVVSFLKNP (669 aa). 4 disulfide bridges follow: Cys-41-Cys-482, Cys-58-Cys-438, Cys-131-Cys-197, and Cys-290-Cys-337. The tract at residues 98–104 is involved in fusion and/or binding to host membrane; that stretch reads SYRDVGV. N-linked (GlcNAc...) asparagine; by host glycosylation occurs at Asn-155. Residues 184–191 are involved in fusion and/or binding to host membrane; it reads GPLWLYST. N-linked (GlcNAc...) asparagine; by host glycans are attached at residues Asn-247, Asn-286, Asn-329, Asn-361, and Asn-486. A disulfide bridge links Cys-510 with Cys-548. Hydrophobic membrane proximal region stretches follow at residues 634-686 and 644-685; these read IEAK…SFLK and SYVN…VSFL. Residues 689–709 traverse the membrane as a helical segment; sequence FGGGLMLILAIVVVVIIIVVF. Over 710–830 the chain is Intravirion; that stretch reads VRQKHVLSKP…GYKSVNVEEA (121 aa). Residues 822–825 carry the Internalization motif motif; sequence YKSV.

This sequence belongs to the herpesviridae glycoprotein B family. In terms of assembly, homotrimer; disulfide-linked. Binds to heparan sulfate proteoglycans. Interacts with gH/gL heterodimer. Post-translationally, a proteolytic cleavage by host furin generates two subunits that remain linked by disulfide bonds.

The protein localises to the virion membrane. It is found in the host cell membrane. It localises to the host endosome membrane. The protein resides in the host Golgi apparatus membrane. Envelope glycoprotein that forms spikes at the surface of virion envelope. Essential for the initial attachment to heparan sulfate moieties of the host cell surface proteoglycans. Involved in fusion of viral and cellular membranes leading to virus entry into the host cell. Following initial binding to its host receptors, membrane fusion is mediated by the fusion machinery composed at least of gB and the heterodimer gH/gL. May be involved in the fusion between the virion envelope and the outer nuclear membrane during virion egress. The polypeptide is Envelope glycoprotein B (Homo sapiens (Human)).